A 576-amino-acid chain; its full sequence is Proline--tRNA ligase (576 aa).

The protein belongs to the class-II aminoacyl-tRNA synthetase family. ProS type 1 subfamily. Homodimer.

It localises to the cytoplasm. It carries out the reaction tRNA(Pro) + L-proline + ATP = L-prolyl-tRNA(Pro) + AMP + diphosphate. Its function is as follows. Catalyzes the attachment of proline to tRNA(Pro) in a two-step reaction: proline is first activated by ATP to form Pro-AMP and then transferred to the acceptor end of tRNA(Pro). As ProRS can inadvertently accommodate and process non-cognate amino acids such as alanine and cysteine, to avoid such errors it has two additional distinct editing activities against alanine. One activity is designated as 'pretransfer' editing and involves the tRNA(Pro)-independent hydrolysis of activated Ala-AMP. The other activity is designated 'posttransfer' editing and involves deacylation of mischarged Ala-tRNA(Pro). The misacylated Cys-tRNA(Pro) is not edited by ProRS. In Leptospira borgpetersenii serovar Hardjo-bovis (strain L550), this protein is Proline--tRNA ligase.